We begin with the raw amino-acid sequence, 31 residues long: Cytochrome b6-f complex subunit 6 (31 aa).

A helical transmembrane segment spans residues 4 to 24 (ITSYFGFLLVALTITSALFIG).

Belongs to the PetL family. As to quaternary structure, the 4 large subunits of the cytochrome b6-f complex are cytochrome b6, subunit IV (17 kDa polypeptide, PetD), cytochrome f and the Rieske protein, while the 4 small subunits are PetG, PetL, PetM and PetN. The complex functions as a dimer.

It is found in the plastid. Its subcellular location is the chloroplast thylakoid membrane. Its function is as follows. Component of the cytochrome b6-f complex, which mediates electron transfer between photosystem II (PSII) and photosystem I (PSI), cyclic electron flow around PSI, and state transitions. PetL is important for photoautotrophic growth as well as for electron transfer efficiency and stability of the cytochrome b6-f complex. The protein is Cytochrome b6-f complex subunit 6 of Pelargonium hortorum (Common geranium).